We begin with the raw amino-acid sequence, 277 residues long: MARLALTVSYVGTRLAGWQIQARTDRPQPRTVQGELERIAERIVGAPVRLHGAGRTDSGVHAEAQVAHMDVPDHRADLDWQRAFNAGLPDDISVAAVVRVPDEFHARFDARGKTYTYRLWPERRWVPPRLAPFAWATGQLDMDAMDAAAAYLHGMHDFASFQNTGTDIVTTVRTVTRVARRHEGEAPVQPALPGAQPLAGAEETANAMAGGLRVMAWDFEADGFLKQMVRNMMGLLVAVGRGKLPPDAVPAILAARDRKTAPATAPAHGLTLTRVHY.

D57 acts as the Nucleophile in catalysis. Residue Y115 coordinates substrate.

Belongs to the tRNA pseudouridine synthase TruA family. Homodimer.

It carries out the reaction uridine(38/39/40) in tRNA = pseudouridine(38/39/40) in tRNA. In terms of biological role, formation of pseudouridine at positions 38, 39 and 40 in the anticodon stem and loop of transfer RNAs. This Nitratidesulfovibrio vulgaris (strain DSM 19637 / Miyazaki F) (Desulfovibrio vulgaris) protein is tRNA pseudouridine synthase A.